Consider the following 142-residue polypeptide: UPF0305 protein MK0666 (142 aa).

This sequence belongs to the UPF0305 family.

The chain is UPF0305 protein MK0666 from Methanopyrus kandleri (strain AV19 / DSM 6324 / JCM 9639 / NBRC 100938).